The following is a 321-amino-acid chain: Probable cell division protein WhiA (321 aa).

Positions Asn-276–Gln-309 form a DNA-binding region, H-T-H motif.

It belongs to the WhiA family.

Involved in cell division and chromosome segregation. In Natranaerobius thermophilus (strain ATCC BAA-1301 / DSM 18059 / JW/NM-WN-LF), this protein is Probable cell division protein WhiA.